Consider the following 509-residue polypeptide: Maturase K (509 aa).

The protein belongs to the intron maturase 2 family. MatK subfamily.

The protein resides in the plastid. Its subcellular location is the chloroplast. Functionally, usually encoded in the trnK tRNA gene intron. Probably assists in splicing its own and other chloroplast group II introns. This is Maturase K from Otacanthus azureus (Brazilian snapdragon).